Consider the following 233-residue polypeptide: Large ribosomal subunit protein uL1 (233 aa).

This sequence belongs to the universal ribosomal protein uL1 family. In terms of assembly, part of the 50S ribosomal subunit.

Binds directly to 23S rRNA. The L1 stalk is quite mobile in the ribosome, and is involved in E site tRNA release. In terms of biological role, protein L1 is also a translational repressor protein, it controls the translation of the L11 operon by binding to its mRNA. This Shewanella piezotolerans (strain WP3 / JCM 13877) protein is Large ribosomal subunit protein uL1.